The following is a 247-amino-acid chain: MLLIPAIDLKDGHCVRLKQGDMDQSTTFGEDPAAMARKWADAGARRLHLVDLNGAFAGQPKNKAAIKAILAEVGSDIPVQLGGGIRDLDTIERYIDAGLRYVIIGTAAVKNPGFLKDACSAFGGHIIVGLDAKDGKVATDGWSKLTGHEVVDLARKFQDWGVESIIYTDIGRDGMLSGINIEATVKLAQALTIPVIASGGLAGMADIEKLCEVEDEGVEGVICGRAIYSGDLDFAAAQARADELAGA.

Catalysis depends on D8, which acts as the Proton acceptor. D131 functions as the Proton donor in the catalytic mechanism.

This sequence belongs to the HisA/HisF family.

It localises to the cytoplasm. The enzyme catalyses 1-(5-phospho-beta-D-ribosyl)-5-[(5-phospho-beta-D-ribosylamino)methylideneamino]imidazole-4-carboxamide = 5-[(5-phospho-1-deoxy-D-ribulos-1-ylimino)methylamino]-1-(5-phospho-beta-D-ribosyl)imidazole-4-carboxamide. It functions in the pathway amino-acid biosynthesis; L-histidine biosynthesis; L-histidine from 5-phospho-alpha-D-ribose 1-diphosphate: step 4/9. This is 1-(5-phosphoribosyl)-5-[(5-phosphoribosylamino)methylideneamino] imidazole-4-carboxamide isomerase from Acidovorax sp. (strain JS42).